The sequence spans 156 residues: MPRKGSVPKRDVLPDPIHNSKLVTKLINKIMLDGKRGTAQRILYSAFNLVEQRSGRDALEVFEEAINNIMPVLEVKARRVGGSNYQVPVEVRPERRTTLGLRWLVNYARLRGEKTMEDRLANEILDAANNTGGAVKKREDTHKMAEANKAFAHYRW.

This sequence belongs to the universal ribosomal protein uS7 family. Part of the 30S ribosomal subunit. Contacts proteins S9 and S11.

In terms of biological role, one of the primary rRNA binding proteins, it binds directly to 16S rRNA where it nucleates assembly of the head domain of the 30S subunit. Is located at the subunit interface close to the decoding center, probably blocks exit of the E-site tRNA. This is Small ribosomal subunit protein uS7 from Staphylococcus aureus (strain bovine RF122 / ET3-1).